The following is a 228-amino-acid chain: 2-C-methyl-D-erythritol 4-phosphate cytidylyltransferase (228 aa).

It belongs to the IspD/TarI cytidylyltransferase family. IspD subfamily.

It catalyses the reaction 2-C-methyl-D-erythritol 4-phosphate + CTP + H(+) = 4-CDP-2-C-methyl-D-erythritol + diphosphate. Its pathway is isoprenoid biosynthesis; isopentenyl diphosphate biosynthesis via DXP pathway; isopentenyl diphosphate from 1-deoxy-D-xylulose 5-phosphate: step 2/6. Functionally, catalyzes the formation of 4-diphosphocytidyl-2-C-methyl-D-erythritol from CTP and 2-C-methyl-D-erythritol 4-phosphate (MEP). This is 2-C-methyl-D-erythritol 4-phosphate cytidylyltransferase from Geobacillus thermodenitrificans (strain NG80-2).